The sequence spans 87 residues: UPF0235 protein TGRD_618 (87 aa).

Belongs to the UPF0235 family.

The protein is UPF0235 protein TGRD_618 of Endomicrobium trichonymphae.